The sequence spans 323 residues: Ribonuclease Z (323 aa).

The Zn(2+) site is built by His-62, His-64, Asp-66, His-67, His-144, Asp-215, and His-273. Catalysis depends on Asp-66, which acts as the Proton acceptor.

This sequence belongs to the RNase Z family. Homodimer. Zn(2+) is required as a cofactor.

It carries out the reaction Endonucleolytic cleavage of RNA, removing extra 3' nucleotides from tRNA precursor, generating 3' termini of tRNAs. A 3'-hydroxy group is left at the tRNA terminus and a 5'-phosphoryl group is left at the trailer molecule.. Its function is as follows. Zinc phosphodiesterase, which displays some tRNA 3'-processing endonuclease activity. Probably involved in tRNA maturation, by removing a 3'-trailer from precursor tRNA. The protein is Ribonuclease Z of Synechococcus sp. (strain WH7803).